The primary structure comprises 65 residues: Large ribosomal subunit protein bL35 (65 aa).

The segment at 1-23 (MPKMKSNRGAAKRFKRTGSGKFK) is disordered. Residues 10 to 23 (AAKRFKRTGSGKFK) show a composition bias toward basic residues.

It belongs to the bacterial ribosomal protein bL35 family.

The sequence is that of Large ribosomal subunit protein bL35 from Acidithiobacillus ferrooxidans (strain ATCC 53993 / BNL-5-31) (Leptospirillum ferrooxidans (ATCC 53993)).